We begin with the raw amino-acid sequence, 454 residues long: tRNA modification GTPase MnmE (454 aa).

Residues Arg-23, Glu-80, and Lys-120 each contribute to the (6S)-5-formyl-5,6,7,8-tetrahydrofolate site. In terms of domain architecture, TrmE-type G spans 216 to 377 (GMKVVIAGRP…LRDHLKQSMG (162 aa)). Asn-226 provides a ligand contact to K(+). GTP is bound by residues 226 to 231 (NAGKSS), 245 to 251 (TDIAGTT), 270 to 273 (DTAG), 335 to 338 (NKAD), and 358 to 360 (SAR). Mg(2+) is bound at residue Ser-230. 3 residues coordinate K(+): Thr-245, Ile-247, and Thr-250. Thr-251 lines the Mg(2+) pocket. Lys-454 provides a ligand contact to (6S)-5-formyl-5,6,7,8-tetrahydrofolate.

The protein belongs to the TRAFAC class TrmE-Era-EngA-EngB-Septin-like GTPase superfamily. TrmE GTPase family. In terms of assembly, homodimer. Heterotetramer of two MnmE and two MnmG subunits. It depends on K(+) as a cofactor.

The protein resides in the cytoplasm. In terms of biological role, exhibits a very high intrinsic GTPase hydrolysis rate. Involved in the addition of a carboxymethylaminomethyl (cmnm) group at the wobble position (U34) of certain tRNAs, forming tRNA-cmnm(5)s(2)U34. This chain is tRNA modification GTPase MnmE, found in Serratia proteamaculans (strain 568).